A 670-amino-acid polypeptide reads, in one-letter code: Solute carrier organic anion transporter family member 1A4 (670 aa).

The Cytoplasmic segment spans residues 1–20 (MGKSEKEVATHGVRCFSKIK). A helical transmembrane segment spans residues 21-40 (AFLLALTCAYVSKSLSGTYM). The Extracellular portion of the chain corresponds to 41–59 (NSMLTQIERQFGIPTSVVG). A helical membrane pass occupies residues 60-80 (LINGSFEIGNLLLIIFVSYFG). Over 81–86 (TKLHRP) the chain is Cytoplasmic. The helical transmembrane segment at 87-111 (IMIGVGCAVMGLGCFLISIPHFLMG) threads the bilayer. Residues 112–155 (RYEYETTILPTSNLSSNSFVCTENRTQTLKPTQDPTECVKEMKS) lie on the Extracellular side of the membrane. Residues Asn-124 and Asn-135 are each glycosylated (N-linked (GlcNAc...) asparagine). Residues 156 to 184 (LMWIYVLVGNIIRGMGETPIMPLGISYIE) form a helical membrane-spanning segment. Residues 185–203 (DFAKSENSPLYIGILETGM) lie on the Cytoplasmic side of the membrane. The helical transmembrane segment at 204-224 (TIGPLIGLLLGSSCANIYVDT) threads the bilayer. The Extracellular portion of the chain corresponds to 225–242 (GSVNTDDLTITPTDTRWV). A helical transmembrane segment spans residues 243-267 (GAWWIGFLVCAGVNILTSIPFFFFP). The Cytoplasmic portion of the chain corresponds to 268–311 (KTLLKEGLQDNGDGTENAKEEKHREKIKEENRGITKDFFLFMKS). Residues 312–333 (LSCNPIYMIFILISVIQVNAFI) traverse the membrane as a helical segment. Residues 334–353 (NSFTFMPKYLEQQYGKSTAE) are Extracellular-facing. The helical transmembrane segment at 354 to 377 (IVFLMGLYMLPPICLGYLIGGLIM) threads the bilayer. Residues 378–381 (KKFK) lie on the Cytoplasmic side of the membrane. Residues 382 to 405 (ITVKKAAYIGFWLSLTEYLLSFVS) traverse the membrane as a helical segment. The Extracellular segment spans residues 406 to 513 (YIMTCDNFPV…PECANKLQYF (108 aa)). The 56-residue stretch at 433-488 (NNVLADCNTKCSCLTNTWDPVCGDNGLSYMSACLAGCEKSVGTGTNMVFQNCSCIQ) folds into the Kazal-like domain. 3 cysteine pairs are disulfide-bonded: Cys-439/Cys-469, Cys-445/Cys-465, and Cys-454/Cys-486. 2 N-linked (GlcNAc...) asparagine glycosylation sites follow: Asn-483 and Asn-492. A helical transmembrane segment spans residues 514 to 536 (LIISIIGCFIFSLGAIPGYMVLL). Residues 537–545 (RCMKSEEKS) lie on the Cytoplasmic side of the membrane. A helical membrane pass occupies residues 546–571 (LGVGLHTFCMRILGGIPAPIYFGALI). The Extracellular portion of the chain corresponds to 572–605 (DRTCLHWGTLKCGEPGACRMYDINSFRRIYLGLP). A helical transmembrane segment spans residues 606 to 623 (AALRGASFLPALFILILM). Residues 624–670 (RKFQFPGDIDSSDTDPAEMKLTAKESKCTNVHRSPTMQNDGERKTKL) lie on the Cytoplasmic side of the membrane. 2 positions are modified to phosphoserine: Ser-634 and Ser-635. The interval 649 to 670 (SKCTNVHRSPTMQNDGERKTKL) is disordered. Residues 651 to 662 (CTNVHRSPTMQN) are compositionally biased toward polar residues.

Belongs to the organo anion transporter (TC 2.A.60) family. Highly expressed in brain and liver. Detected at very low levels in heart and lung.

The protein localises to the cell membrane. It catalyses the reaction estrone 3-sulfate(out) = estrone 3-sulfate(in). It carries out the reaction taurocholate(out) = taurocholate(in). The enzyme catalyses prostaglandin E2(out) = prostaglandin E2(in). The catalysed reaction is L-thyroxine(out) = L-thyroxine(in). Functionally, mediates the Na(+)-independent transport of organic anions such as taurocholate, cholate, 17-beta-glucuronosyl estradiol, prostaglandin E2, estrone 3-sulfate, L-thyroxine (T4), the cardiac glycosides ouabain and digoxin and thyroid hormones. Shows a pH-sensitive substrate specificity which may be ascribed to the protonation state of the binding site and leads to a stimulation of substrate transport in an acidic microenvironment. Hydrogencarbonate/HCO3(-) acts as the probable counteranion that exchanges for organic anions. This Mus musculus (Mouse) protein is Solute carrier organic anion transporter family member 1A4 (Slco1a4).